Here is a 313-residue protein sequence, read N- to C-terminus: Homeobox protein knotted-1-like 2 (313 aa).

Residues 13–40 are disordered; that stretch reads DPSSAAASSPNPSFSPGGGGGGGVGGGE. The span at 14-27 shows a compositional bias: low complexity; that stretch reads PSSAAASSPNPSFS. The segment covering 28–38 has biased composition (gly residues); the sequence is PGGGGGGGVGG. Positions 205-225 constitute an ELK domain; the sequence is ELKNELKQGYKEKLVDIREEI. The homeobox; TALE-type DNA-binding region spans 226–289; the sequence is LRKRRAGKLP…NQRKRNWHSN (64 aa). Residues 282–313 are disordered; sequence RKRNWHSNPASSGEKTKKKRNVTGDGGAEQSW.

The protein belongs to the TALE/KNOX homeobox family. Isoform 1 is expressed in roots, leaf blades, leaf sheaths and flowers. Isoform 2 is expressed in leaf blades, leaf sheaths and flowers.

Its subcellular location is the nucleus. The sequence is that of Homeobox protein knotted-1-like 2 (HOS58) from Oryza sativa subsp. japonica (Rice).